A 308-amino-acid polypeptide reads, in one-letter code: UPF0282 protein STK_23220 (308 aa).

The protein belongs to the UPF0282 family.

The protein is UPF0282 protein STK_23220 of Sulfurisphaera tokodaii (strain DSM 16993 / JCM 10545 / NBRC 100140 / 7) (Sulfolobus tokodaii).